A 299-amino-acid chain; its full sequence is CCR4-NOT transcription complex subunit 9 (299 aa).

N-acetylmethionine is present on M1.

Belongs to the CNOT9 family. As to quaternary structure, homodimer. Component of the CCR4-NOT complex; distinct complexes seem to exist that differ in the participation of probably mutually exclusive catalytic subunits. Interacts with MYB, ATF2, RARA, RARB, RARG, RXRA, RXRB and RXRG. Identified in a complex with ATF2 bound to target DNA. Interacts with NANOS2. Directly interacts with ZNF335. As to expression, detected in spleen, thymus, prostate, testis, ovary and intestine.

The protein resides in the nucleus. The protein localises to the cytoplasm. It localises to the P-body. Its function is as follows. Component of the CCR4-NOT complex which is one of the major cellular mRNA deadenylases and is linked to various cellular processes including bulk mRNA degradation, miRNA-mediated repression, translational repression during translational initiation and general transcription regulation. Additional complex functions may be a consequence of its influence on mRNA expression. Involved in down-regulation of MYB- and JUN-dependent transcription. May play a role in cell differentiation. Can bind oligonucleotides, such as poly-G, poly-C or poly-T (in vitro), but the physiological relevance of this is not certain. Does not bind poly-A. Enhances ligand-dependent transcriptional activity of nuclear hormone receptors, including RARA, expect ESR1-mediated transcription that is not only slightly increased, if at all. The chain is CCR4-NOT transcription complex subunit 9 from Homo sapiens (Human).